Here is a 134-residue protein sequence, read N- to C-terminus: Small ribosomal subunit protein uS11 (134 aa).

Disordered stretches follow at residues 1 to 24 (MPPK…VAHG) and 115 to 134 (IQDV…RRRV). Residues 9–18 (AVKKVRRKEK) are compositionally biased toward basic residues.

It belongs to the universal ribosomal protein uS11 family. Part of the 30S ribosomal subunit. Interacts with proteins S7 and S18. Binds to IF-3.

In terms of biological role, located on the platform of the 30S subunit, it bridges several disparate RNA helices of the 16S rRNA. Forms part of the Shine-Dalgarno cleft in the 70S ribosome. The chain is Small ribosomal subunit protein uS11 from Saccharopolyspora erythraea (strain ATCC 11635 / DSM 40517 / JCM 4748 / NBRC 13426 / NCIMB 8594 / NRRL 2338).